The following is a 61-amino-acid chain: Large ribosomal subunit protein bL32 (61 aa).

The segment covering 1-16 has biased composition (basic residues); that stretch reads MAVPKRKTSPSKRGMR. The interval 1–61 is disordered; sequence MAVPKRKTSP…RSVLTPKNSG (61 aa). Residues 28-44 are compositionally biased toward basic and acidic residues; it reads VEDKDSGELRRPHHIDL.

The protein belongs to the bacterial ribosomal protein bL32 family.

The protein is Large ribosomal subunit protein bL32 of Bartonella bacilliformis (strain ATCC 35685 / KC583 / Herrer 020/F12,63).